The sequence spans 148 residues: Large ribosomal subunit protein bL9 (148 aa).

This sequence belongs to the bacterial ribosomal protein bL9 family.

In terms of biological role, binds to the 23S rRNA. The polypeptide is Large ribosomal subunit protein bL9 (Lachnoclostridium phytofermentans (strain ATCC 700394 / DSM 18823 / ISDg) (Clostridium phytofermentans)).